The chain runs to 488 residues: Glycogen synthase (488 aa).

Lysine 17 lines the ADP-alpha-D-glucose pocket.

It belongs to the glycosyltransferase 1 family. Bacterial/plant glycogen synthase subfamily.

It catalyses the reaction [(1-&gt;4)-alpha-D-glucosyl](n) + ADP-alpha-D-glucose = [(1-&gt;4)-alpha-D-glucosyl](n+1) + ADP + H(+). It functions in the pathway glycan biosynthesis; glycogen biosynthesis. Functionally, synthesizes alpha-1,4-glucan chains using ADP-glucose. The polypeptide is Glycogen synthase (Nitratidesulfovibrio vulgaris (strain DSM 19637 / Miyazaki F) (Desulfovibrio vulgaris)).